The chain runs to 542 residues: Chaperonin GroEL (542 aa).

ATP is bound by residues 29–32 (TMGP), Lys-50, 86–90 (DGTTT), Gly-414, 477–479 (NAA), and Asp-493.

Belongs to the chaperonin (HSP60) family. Forms a cylinder of 14 subunits composed of two heptameric rings stacked back-to-back. Interacts with the co-chaperonin GroES.

It localises to the cytoplasm. It catalyses the reaction ATP + H2O + a folded polypeptide = ADP + phosphate + an unfolded polypeptide.. Functionally, together with its co-chaperonin GroES, plays an essential role in assisting protein folding. The GroEL-GroES system forms a nano-cage that allows encapsulation of the non-native substrate proteins and provides a physical environment optimized to promote and accelerate protein folding. The protein is Chaperonin GroEL of Sulfurovum sp. (strain NBC37-1).